The chain runs to 856 residues: Envelope glycoprotein gp150 (856 aa).

The Extracellular segment spans residues methionine 1 to lysine 785. Residues asparagine 220, asparagine 258, asparagine 269, asparagine 274, asparagine 298, asparagine 330, asparagine 336, asparagine 342, asparagine 418, asparagine 422, asparagine 448, asparagine 469, asparagine 481, asparagine 499, asparagine 518, asparagine 531, asparagine 548, asparagine 551, and asparagine 556 are each glycosylated (N-linked (GlcNAc...) asparagine; by host). The interval valine 616–isoleucine 636 is fusion peptide. A coiled-coil region spans residues histidine 643–alanine 693. Residues isoleucine 662–lysine 680 form an immunosuppression region. N-linked (GlcNAc...) asparagine; by host glycosylation is found at asparagine 717, asparagine 721, asparagine 729, and asparagine 737. Residues tyrosine 736 to aspartate 772 are a coiled coil. The chain crosses the membrane as a helical span at residues glycine 786 to proline 806. The Cytoplasmic segment spans residues threonine 807–glutamate 856.

As to quaternary structure, the mature envelope protein (Env) consists of a trimer of SU-TM heterodimers attached by noncovalent interactions or by a labile interchain disulfide bond. In terms of processing, specific enzymatic cleavages in vivo yield mature proteins. Envelope glycoproteins are synthesized as an inactive precursor that is N-glycosylated and processed likely by host cell furin or by a furin-like protease in the Golgi to yield the mature SU and TM proteins. The cleavage site between SU and TM requires the minimal sequence [KR]-X-[KR]-R.

The protein localises to the virion membrane. It is found in the host cell membrane. Functionally, the surface protein (SU) attaches the virus to the host cell by binding to its receptor. This interaction triggers the refolding of the transmembrane protein (TM) and is thought to activate its fusogenic potential by unmasking its fusion peptide. Fusion occurs at the host cell plasma membrane. The transmembrane protein (TM) acts as a class I viral fusion protein. Under the current model, the protein has at least 3 conformational states: pre-fusion native state, pre-hairpin intermediate state, and post-fusion hairpin state. During viral and target cell membrane fusion, the coiled coil regions (heptad repeats) assume a trimer-of-hairpins structure, positioning the fusion peptide in close proximity to the C-terminal region of the ectodomain. The formation of this structure appears to drive apposition and subsequent fusion of viral and target cell membranes. Membranes fusion leads to delivery of the nucleocapsid into the cytoplasm. The polypeptide is Envelope glycoprotein gp150 (env) (Feline immunodeficiency virus (strain UT-113) (FIV)).